The primary structure comprises 161 residues: Large ribosomal subunit protein uL15 (161 aa).

The segment at 1–43 (MKLSEISDNPGARKKRMRIGRGIGSGKGKTGGRGGKGQTARSG) is disordered. The segment covering 21–37 (RGIGSGKGKTGGRGGKG) has biased composition (gly residues).

The protein belongs to the universal ribosomal protein uL15 family. As to quaternary structure, part of the 50S ribosomal subunit.

In terms of biological role, binds to the 23S rRNA. The chain is Large ribosomal subunit protein uL15 from Rhodopseudomonas palustris (strain HaA2).